We begin with the raw amino-acid sequence, 277 residues long: Protein PTST, chloroplastic (277 aa).

The transit peptide at 1-44 (MGCVPRIEFGCSSQSLTLSWNLRAWNLCRLNTISHFQKLPYPLV) directs the protein to the chloroplast. A coiled-coil region spans residues 95–152 (DTERSKLVKKLSEANQQNRFLKRQLKTQEHEITNIKTELALMELEVQALVKLAEEIAN).

In terms of assembly, interacts with GBSS1.

It localises to the plastid. The protein localises to the chloroplast stroma. Functionally, involved in targeting GBSS1 to the starch granule. Was originally thought to be a carbohydrate-binding scaffold protein, but it has been shown that it is mainly found as a soluble protein and that interaction with GBSS1 is a pre-requisite for subsequent starch granule binding. Dissociation from starch as a function of pH, Mg(2+) concentration or redox state is not observed. Interacts primarily with amylopectin and is required for amylose synthesis. The polypeptide is Protein PTST, chloroplastic (Arabidopsis thaliana (Mouse-ear cress)).